Reading from the N-terminus, the 398-residue chain is Arginine biosynthesis bifunctional protein ArgJ (398 aa).

Substrate-binding residues include T148, K174, T185, E271, N393, and T398. T185 functions as the Nucleophile in the catalytic mechanism.

The protein belongs to the ArgJ family. Heterotetramer of two alpha and two beta chains.

It is found in the cytoplasm. The catalysed reaction is N(2)-acetyl-L-ornithine + L-glutamate = N-acetyl-L-glutamate + L-ornithine. It carries out the reaction L-glutamate + acetyl-CoA = N-acetyl-L-glutamate + CoA + H(+). It functions in the pathway amino-acid biosynthesis; L-arginine biosynthesis; L-ornithine and N-acetyl-L-glutamate from L-glutamate and N(2)-acetyl-L-ornithine (cyclic): step 1/1. The protein operates within amino-acid biosynthesis; L-arginine biosynthesis; N(2)-acetyl-L-ornithine from L-glutamate: step 1/4. Catalyzes two activities which are involved in the cyclic version of arginine biosynthesis: the synthesis of N-acetylglutamate from glutamate and acetyl-CoA as the acetyl donor, and of ornithine by transacetylation between N(2)-acetylornithine and glutamate. The polypeptide is Arginine biosynthesis bifunctional protein ArgJ (Listeria monocytogenes serotype 4b (strain F2365)).